The chain runs to 236 residues: UPF0257 lipoprotein YnfC (236 aa).

Positions 1–16 (MKYKLLPCLLAIFLTG) are cleaved as a signal peptide. Cys17 carries the N-palmitoyl cysteine lipid modification. Residue Cys17 is the site of S-diacylglycerol cysteine attachment.

Belongs to the UPF0257 family.

The protein resides in the cell membrane. This is UPF0257 lipoprotein YnfC from Escherichia coli O17:K52:H18 (strain UMN026 / ExPEC).